We begin with the raw amino-acid sequence, 55 residues long: Large ribosomal subunit protein bL33 (55 aa).

Belongs to the bacterial ribosomal protein bL33 family. Part of the 50S ribosomal subunit. Contacts protein L35.

In terms of biological role, binds the 23S rRNA and the E site tRNA. The sequence is that of Large ribosomal subunit protein bL33 (rpmG) from Deinococcus radiodurans (strain ATCC 13939 / DSM 20539 / JCM 16871 / CCUG 27074 / LMG 4051 / NBRC 15346 / NCIMB 9279 / VKM B-1422 / R1).